A 295-amino-acid polypeptide reads, in one-letter code: MEIRRRPPNPTVRVENLEYAVPHREAKAKNILEEIVWYKDTEIKNFKKIVSLEDLIKKLDKLSPPKDFFQSILHSKIKPGVIAEIKKASPSKGVIREDFKPKEIASCYEKSGASCISVLTDKRFFQGSYEILQDVRTATNLPLLCKDFIISAYQIYKARVSGADAILLIAAILSDDDLFYLKKIADNLKMSVLVEVHDGQELERILSLKSFNLIGINNRNLKTFKTDLKTSIRIMSKYSDIFSKHNIVPISESGINNSDDLKTLNSIGIKGVLIGERFMRESDIENSFKKLFNSI.

Belongs to the TrpC family.

It catalyses the reaction 1-(2-carboxyphenylamino)-1-deoxy-D-ribulose 5-phosphate + H(+) = (1S,2R)-1-C-(indol-3-yl)glycerol 3-phosphate + CO2 + H2O. The protein operates within amino-acid biosynthesis; L-tryptophan biosynthesis; L-tryptophan from chorismate: step 4/5. This is Indole-3-glycerol phosphate synthase from Prochlorococcus marinus subsp. pastoris (strain CCMP1986 / NIES-2087 / MED4).